Consider the following 288-residue polypeptide: Transposase InsF for insertion sequence IS3fB (288 aa).

The Integrase catalytic domain maps to 124-287; that stretch reads YASGPNQKWA…SPEQFENQNL (164 aa).

Belongs to the transposase IS3/IS150/IS904 family.

Functionally, involved in the transposition of the insertion sequence IS3. This Escherichia coli (strain K12) protein is Transposase InsF for insertion sequence IS3fB (insF7).